The sequence spans 144 residues: Protein cornichon homolog 1 (144 aa).

Residues 1-10 lie on the Cytoplasmic side of the membrane; it reads MAFTFAAFCY. The helical transmembrane segment at 11–31 threads the bilayer; it reads MLALLLTATLIFFAIWHIIAF. At 32–56 the chain is on the lumenal side; the sequence is DELKTDYKNPIDQCNTLNPLVLPEY. The helical transmembrane segment at 57–77 threads the bilayer; sequence LIHAFFCVMFLCAAEWLTLGL. At 78 to 122 the chain is on the cytoplasmic side; it reads NMPLLAYHIWRYMSRPVMSGPGLYDPTTIMNADILAYCQKEGWCK. Residues 123–143 form a helical membrane-spanning segment; it reads LAFYLLAFFYYLYGMIYVLVS. Ser144 is a topological domain (lumenal).

It belongs to the cornichon family. In terms of assembly, interacts with AREG immature precursor and with immature TGFA, i.e. with a prosegment and lacking full N-glycosylation, but not with the fully N-glycosylated form. In the Golgi apparatus, may form a complex with GORASP55 and transmembrane TGFA.

It is found in the endoplasmic reticulum membrane. It localises to the golgi apparatus membrane. Its function is as follows. Involved in the selective transport and maturation of TGF-alpha family proteins. The polypeptide is Protein cornichon homolog 1 (CNIH1) (Pongo abelii (Sumatran orangutan)).